The primary structure comprises 393 residues: Methyltransferase-like protein 22 (393 aa).

The interval 54 to 87 is disordered; it reads WTDSGAEDSGPTDVSTEEMPPAGSGSGHSHEDLS. The residue at position 120 (Ser-120) is a Phosphoserine.

It belongs to the methyltransferase superfamily. METTL22 family. As to quaternary structure, interacts with members of the heat shock protein 90 and 70 families; these proteins probably are methylation substrates.

It is found in the nucleus. The enzyme catalyses L-lysyl-[protein] + 3 S-adenosyl-L-methionine = N(6),N(6),N(6)-trimethyl-L-lysyl-[protein] + 3 S-adenosyl-L-homocysteine + 3 H(+). Functionally, protein N-lysine methyltransferase. Trimethylates KIN at Lys-135 (in vitro). The protein is Methyltransferase-like protein 22 (Mettl22) of Mus musculus (Mouse).